The primary structure comprises 316 residues: tRNA dimethylallyltransferase (316 aa).

An ATP-binding site is contributed by 17–24; that stretch reads GPTASGKT. Residue 19 to 24 participates in substrate binding; it reads TASGKT. Interaction with substrate tRNA regions lie at residues 42–45, 166–170, 247–252, and 280–287; these read DSAL, QRLSR, RCVGYR, and KRQITWLR.

Belongs to the IPP transferase family. In terms of assembly, monomer. Mg(2+) serves as cofactor.

The catalysed reaction is adenosine(37) in tRNA + dimethylallyl diphosphate = N(6)-dimethylallyladenosine(37) in tRNA + diphosphate. In terms of biological role, catalyzes the transfer of a dimethylallyl group onto the adenine at position 37 in tRNAs that read codons beginning with uridine, leading to the formation of N6-(dimethylallyl)adenosine (i(6)A). This is tRNA dimethylallyltransferase from Escherichia coli O157:H7.